Reading from the N-terminus, the 141-residue chain is MAKKITAVIKLALQAGKANPAPPVGPALGQHGVNIMAFCKEYNARTQDKAGFVIPVEISVFEDRSFTFITKTPPASVLITKAAGIAKGSGDSAKGQAGSINRAQLEEIAKTKLPDLNCNNIESAMKVIAGTARNMGVSVSD.

This sequence belongs to the universal ribosomal protein uL11 family. As to quaternary structure, part of the ribosomal stalk of the 50S ribosomal subunit. Interacts with L10 and the large rRNA to form the base of the stalk. L10 forms an elongated spine to which L12 dimers bind in a sequential fashion forming a multimeric L10(L12)X complex. In terms of processing, one or more lysine residues are methylated.

Its function is as follows. Forms part of the ribosomal stalk which helps the ribosome interact with GTP-bound translation factors. The protein is Large ribosomal subunit protein uL11 of Prochlorococcus marinus (strain SARG / CCMP1375 / SS120).